Consider the following 390-residue polypeptide: DNA polymerase IV (390 aa).

In terms of domain architecture, UmuC spans 6 to 187; that stretch reads VMHVDLDAFF…LDIAVMPGIG (182 aa). 2 residues coordinate Mg(2+): Asp-10 and Asp-105. Glu-106 is an active-site residue.

The protein belongs to the DNA polymerase type-Y family. Monomer. The cofactor is Mg(2+).

The protein resides in the cytoplasm. It carries out the reaction DNA(n) + a 2'-deoxyribonucleoside 5'-triphosphate = DNA(n+1) + diphosphate. Functionally, poorly processive, error-prone DNA polymerase involved in untargeted mutagenesis. Copies undamaged DNA at stalled replication forks, which arise in vivo from mismatched or misaligned primer ends. These misaligned primers can be extended by PolIV. Exhibits no 3'-5' exonuclease (proofreading) activity. May be involved in translesional synthesis, in conjunction with the beta clamp from PolIII. This chain is DNA polymerase IV, found in Dehalococcoides mccartyi (strain ATCC BAA-2100 / JCM 16839 / KCTC 5957 / BAV1).